The following is a 514-amino-acid chain: Carboxysome shell carbonic anhydrase (514 aa).

The tract at residues 1 to 27 (MAYRNRNLASQTQRPLAPTAPRRRPVV) is disordered. C175 contacts Zn(2+). Catalysis depends on D177, which acts as the Proton acceptor. H243 and C254 together coordinate Zn(2+).

The protein belongs to the beta-class carbonic anhydrase family. CsoSCA subfamily. In terms of assembly, homodimer. It depends on Zn(2+) as a cofactor.

The protein resides in the carboxysome. It carries out the reaction hydrogencarbonate + H(+) = CO2 + H2O. Functionally, reversible hydration of carbon dioxide. Essential for photosynthetic carbon dioxide fixation, supplies CO(2) to RuBisCO (ribulose bisphosphate carboxylase, cbbL-cbbS) in the carboxysome. The sequence is that of Carboxysome shell carbonic anhydrase from Prochlorococcus marinus (strain MIT 9313).